A 376-amino-acid chain; its full sequence is Phytanoyl-CoA hydroxylase-interacting protein-like (376 aa).

One can recognise a Fibronectin type-III domain in the interval 52 to 161 (VPHNIKISNI…EIIEFCTADY (110 aa)).

It belongs to the PHYHIP family.

Its function is as follows. May play a role in the development of the central system. The sequence is that of Phytanoyl-CoA hydroxylase-interacting protein-like (phyhipl) from Xenopus laevis (African clawed frog).